Reading from the N-terminus, the 277-residue chain is Methyltransferase str3 (277 aa).

Belongs to the methyltransferase superfamily. LaeA methyltransferase family.

The protein operates within mycotoxin biosynthesis. In terms of biological role, methyltransferase; part of the gene cluster that mediates the biosynthesis of strobilurin A, an antifungal polyketide that contains a key beta-methoxyacrylate toxophore that targets the complex III of the mitochondrial electron transport chain. Strobilurin biosynthesis begins with construction of benzoyl CoA by step-wise elimination of ammonia from phenylalanine by the phenylalanine ammonia-lyase str11, oxygenation by str8 and retro-Claisen reaction to form benzoic acid, which is activated to its CoA thiolester benzoyl CoA by the dedicated CoA ligase str10. Benzoyl CoA forms the starter unit for the highly reducing polyketide synthase stpks1 that produces the polyketide prestrobilutin A. The FAD-dependent oxygenase str9 then catalyzes the key oxidative rearrangement responsible for the creation of the beta-methoxyacrylate toxophore. Str9 performs epoxidation of the 2,3 olefin of prestrobilutin A, followed by Meinwald rearrangement to furnish the aldehyde intermediate. Rapid enolization of the aldehyde intermediate would give the beta-methoxyacrylate skeleton and methylations catalyzed by str2 and str3 complete the synthesis and lead to the production of strobilurin A. The short-chain dehydrogenase stl2 and the dehydrogenase str4 play a role in the shunt pathway leading to the production of bolineol. The cluster encodes no obvious halogenase gene that could be involved in production of strobilurin B, nor any obvious dimethylallyl-transferase that could be involved in the production of strobilurin G. It is possible that unknown proteins encoded in, or near, the cluster (such as str1 or stl1) may form new classes of halogenases or dimethylally-transferases, or that the responsible genes are located elsewhere on the genome. Similarly, proteins encoded by str5/str6 hydrolases appear to have no chemical role in the biosynthesis of strobilurin A. Finally, no obvious self-resistance gene is found within the cluster. In Strobilurus tenacellus, this protein is Methyltransferase str3.